The sequence spans 142 residues: Glia maturation factor gamma (142 aa).

S2 is modified (N-acetylserine). Residues 4–139 (SLVVCEVDPE…TETWLKEKLA (136 aa)) form the ADF-H domain.

It belongs to the actin-binding proteins ADF family. GMF subfamily.

This Mus musculus (Mouse) protein is Glia maturation factor gamma (Gmfg).